The primary structure comprises 127 residues: Small ribosomal subunit protein uS11 (127 aa).

The protein belongs to the universal ribosomal protein uS11 family. Part of the 30S ribosomal subunit. Interacts with proteins S7 and S18. Binds to IF-3.

Located on the platform of the 30S subunit, it bridges several disparate RNA helices of the 16S rRNA. Forms part of the Shine-Dalgarno cleft in the 70S ribosome. This is Small ribosomal subunit protein uS11 from Flavobacterium johnsoniae (strain ATCC 17061 / DSM 2064 / JCM 8514 / BCRC 14874 / CCUG 350202 / NBRC 14942 / NCIMB 11054 / UW101) (Cytophaga johnsonae).